Reading from the N-terminus, the 78-residue chain is Small ribosomal subunit protein bS16c (78 aa).

Belongs to the bacterial ribosomal protein bS16 family.

It localises to the plastid. It is found in the chloroplast. This chain is Small ribosomal subunit protein bS16c, found in Phaeodactylum tricornutum (strain CCAP 1055/1).